Here is a 290-residue protein sequence, read N- to C-terminus: 33 kDa chaperonin (290 aa).

Intrachain disulfides connect Cys231-Cys233 and Cys263-Cys266.

The protein belongs to the HSP33 family. Under oxidizing conditions two disulfide bonds are formed involving the reactive cysteines. Under reducing conditions zinc is bound to the reactive cysteines and the protein is inactive.

It localises to the cytoplasm. Its function is as follows. Redox regulated molecular chaperone. Protects both thermally unfolding and oxidatively damaged proteins from irreversible aggregation. Plays an important role in the bacterial defense system toward oxidative stress. The sequence is that of 33 kDa chaperonin from Thermotoga petrophila (strain ATCC BAA-488 / DSM 13995 / JCM 10881 / RKU-1).